The sequence spans 184 residues: Cytosolic Prostaglandin E synthase (184 aa).

The 90-residue stretch at 7–96 (LIPPPVSWAQ…AAGPYWSSLT (90 aa)) folds into the CS domain. Residues 115–184 (ESDDEEGDQK…EGDKEKKPAA (70 aa)) are disordered. 5 positions are modified to phosphoserine: S116, S127, S135, S156, and S162. The span at 147–158 (FNVDDEEEDSDD) shows a compositional bias: acidic residues. The segment covering 175-184 (EGDKEKKPAA) has biased composition (basic and acidic residues).

The protein belongs to the p23/wos2 family.

It is found in the cytoplasm. The catalysed reaction is prostaglandin H2 = prostaglandin E2. Its function is as follows. Cytosolic prostaglandin synthase that catalyzes the oxidoreduction of prostaglandin endoperoxide H2 (PGH2) to prostaglandin E2 (PGE2). Through production of PGE2 may regulate the activity of non-muscle myosin II in an autocrine or paracrine fashion; this may influence border cell and nurse cell stiffness to facilitate border cell migration during oogenesis. This chain is Cytosolic Prostaglandin E synthase, found in Drosophila melanogaster (Fruit fly).